A 246-amino-acid chain; its full sequence is Phycobilisome rod-core linker polypeptide CpcG2 (246 aa).

Positions 11 to 189 (SSQNQRVAGY…YWRDKLENSR (179 aa)) constitute a PBS-linker domain. The disordered stretch occupies residues 224–246 (DTTRRDRPTVPASINPTASFPLR). Residues 235 to 246 (ASINPTASFPLR) show a composition bias toward polar residues.

It belongs to the phycobilisome linker protein family. In terms of assembly, the phycobilisome is a hemidiscoidal structure that is composed of two distinct substructures: a core complex and a number of rods radiating from the core.

The protein localises to the cellular thylakoid membrane. In terms of biological role, rod-core linker protein required for attachment of phycocyanin to allophycocyanin in cores of phycobilisomes. Linker polypeptides determine the state of aggregation and the location of the disk-shaped phycobiliprotein units within the phycobilisome and modulate their spectroscopic properties in order to mediate a directed and optimal energy transfer. The chain is Phycobilisome rod-core linker polypeptide CpcG2 (cpcG2) from Thermosynechococcus vestitus (strain NIES-2133 / IAM M-273 / BP-1).